A 224-amino-acid polypeptide reads, in one-letter code: Iron-sulfur cluster repair protein ScdA (224 aa).

This sequence belongs to the RIC family. ScdA subfamily. Homodimer.

The protein resides in the cytoplasm. In terms of biological role, di-iron-containing protein involved in the repair of iron-sulfur clusters damaged by oxidative and nitrosative stress conditions. The chain is Iron-sulfur cluster repair protein ScdA from Staphylococcus epidermidis (strain ATCC 35984 / DSM 28319 / BCRC 17069 / CCUG 31568 / BM 3577 / RP62A).